The primary structure comprises 81 residues: Small ribosomal subunit protein bS16 (81 aa).

This sequence belongs to the bacterial ribosomal protein bS16 family.

The sequence is that of Small ribosomal subunit protein bS16 from Clostridium acetobutylicum (strain ATCC 824 / DSM 792 / JCM 1419 / IAM 19013 / LMG 5710 / NBRC 13948 / NRRL B-527 / VKM B-1787 / 2291 / W).